Consider the following 433-residue polypeptide: Indole diterpene prenyltransferase terF (433 aa).

This sequence belongs to the tryptophan dimethylallyltransferase family.

The protein operates within secondary metabolite biosynthesis. Its function is as follows. Indole diterpene prenyltransferase; part of the gene cluster that mediates the biosynthesis of terpendoles, indole-diterpene (IDT) mycotoxins including terpendole I, terpendole K, terpendole C, as well as the kinesin Eg5 inhibitor terpendole E. Terpendoles biosynthesis begins with the synthesis of geranylgeranyl diphosphate (GGPP) by a yet unidentified GGPP synthase. Condensation of indole-3-glycerol phosphate with GGPP by the prenyltransferase terC then forms 3-geranylgeranylindole (3-GGI), followed by epoxidation and cyclization of this intermediate (by the FAD-dependent monooxygeanse terM and the terpene cyclase terB) to form paspaline. The cytochrome monooxygenase terQ then hydroxylates paspalline at C-11 to yield terpendole E. The cytochrome monooxygenase terP converts terpendole E to 13-desoxyterpendole I, and terQ converts 13-desoxyterpendole I into terpendole I. TerF and terK are required for conversion of terpendole I to terpendole C which is further converted to terpendole K. The polypeptide is Indole diterpene prenyltransferase terF (Tolypocladium album (Soil fungus)).